Consider the following 976-residue polypeptide: Ephrin type-A receptor 1 (976 aa).

The first 25 residues, 1 to 25, serve as a signal peptide directing secretion; the sequence is MERRWPLGLGLVLLLCAPLPPGARA. Over 26–547 the chain is Extracellular; sequence KEVTLMDTSK…PVSRGLTGGE (522 aa). The 183-residue stretch at 27 to 209 folds into the Eph LBD domain; sequence EVTLMDTSKA…FYQRCPETLN (183 aa). Fibronectin type-III domains follow at residues 332–445 and 447–538; these read PPSA…MGHA and SLSG…TSPP. N-linked (GlcNAc...) asparagine glycosylation occurs at asparagine 414. A helical transmembrane segment spans residues 548–568; the sequence is IVAVIFGLLLGAALLLGILVF. The Cytoplasmic segment spans residues 569 to 976; the sequence is RSRRAQRQRQ…ILCSIQGFKD (408 aa). 2 positions are modified to phosphotyrosine; by autocatalysis: tyrosine 599 and tyrosine 605. Residues 624–884 form the Protein kinase domain; it reads LMVDTVIGEG…KLQAHLEQLL (261 aa). ATP contacts are provided by residues 630 to 638 and lysine 656; that span reads IGEGEFGEV. Aspartate 749 (proton acceptor) is an active-site residue. Position 781 is a phosphotyrosine; by autocatalysis (tyrosine 781). A phosphoserine mark is found at serine 906 and serine 910. In terms of domain architecture, SAM spans 913–976; sequence IPYRTVSEWL…ILCSIQGFKD (64 aa). Tyrosine 930 is subject to Phosphotyrosine; by autocatalysis. A PDZ-binding motif is present at residues 974–976; sequence FKD.

Belongs to the protein kinase superfamily. Tyr protein kinase family. Ephrin receptor subfamily. Homodimer. Forms a signaling complex with LCK; PTK2B/PYK2 and PI3-kinase upon activation by EFNA1; regulates T-lymphocytes migration. Interacts (via SAM domain) with ILK (via ANK repeats); stimulated by EFNA1 but independent of the kinase activity of EPHA1. Interacts (kinase activity-dependent) with PTK2/FAK1. In terms of processing, phosphorylated. Autophosphorylation is stimulated by its ligand EFNA1. Ubiquitinated. As to expression, overexpressed in several carcinomas.

Its subcellular location is the cell membrane. It carries out the reaction L-tyrosyl-[protein] + ATP = O-phospho-L-tyrosyl-[protein] + ADP + H(+). Its function is as follows. Receptor tyrosine kinase which binds promiscuously membrane-bound ephrin-A family ligands residing on adjacent cells, leading to contact-dependent bidirectional signaling into neighboring cells. The signaling pathway downstream of the receptor is referred to as forward signaling while the signaling pathway downstream of the ephrin ligand is referred to as reverse signaling. Binds with a low affinity EFNA3 and EFNA4 and with a high affinity to EFNA1 which most probably constitutes its cognate/functional ligand. Upon activation by EFNA1 induces cell attachment to the extracellular matrix inhibiting cell spreading and motility through regulation of ILK and downstream RHOA and RAC. Also plays a role in angiogenesis and regulates cell proliferation. May play a role in apoptosis. The polypeptide is Ephrin type-A receptor 1 (EPHA1) (Homo sapiens (Human)).